A 166-amino-acid polypeptide reads, in one-letter code: Probable DHNTP pyrophosphohydrolase (166 aa).

In terms of domain architecture, Nudix hydrolase spans 42–166; sequence DLQLSASALV…FKKYYRYKNI (125 aa). Residues 73-94 carry the Nudix box motif; it reads GHVELKESPLDTAIREFHEETG. Residues glutamate 88 and glutamate 92 each contribute to the Mg(2+) site.

It belongs to the Nudix hydrolase family. As to quaternary structure, monomer. The cofactor is Mg(2+).

It functions in the pathway cofactor biosynthesis; tetrahydrofolate biosynthesis; 2-amino-4-hydroxy-6-hydroxymethyl-7,8-dihydropteridine diphosphate from 7,8-dihydroneopterin triphosphate: step 1/4. Its function is as follows. Probably mediates the removal of pyrophosphate from dihydroneopterin triphosphate (DHNTP), a possible step in the pterin branch of the folate synthesis pathway. The protein is Probable DHNTP pyrophosphohydrolase (folQ) of Lactococcus lactis subsp. cremoris (strain MG1363).